The sequence spans 478 residues: Sporozoite surface protein P36p (478 aa).

Residues 1–41 (MYVLVLIHMCYHFTMKRKKLFVYFIFLSFIINFNFNININF) form the signal peptide. 2 consecutive 6-Cys domains span residues 42–178 (VCSN…IKKT) and 181–326 (KIKG…FDNN). 6 cysteine pairs are disulfide-bonded: cysteine 59-cysteine 71, cysteine 85-cysteine 159, cysteine 102-cysteine 157, cysteine 185-cysteine 209, cysteine 223-cysteine 302, and cysteine 243-cysteine 300. 2 N-linked (GlcNAc...) asparagine glycosylation sites follow: asparagine 109 and asparagine 138. 3 N-linked (GlcNAc...) asparagine glycosylation sites follow: asparagine 229, asparagine 279, and asparagine 291. Serine 455 carries GPI-anchor amidated serine lipidation. Residues 456–478 (SSKYILFNNFLILFIFLIYIYST) constitute a propeptide, removed in mature form.

Its subcellular location is the cell surface. The protein resides in the cell membrane. Involved in sporozoite infection of hepatocytes and replication therein. The protein is Sporozoite surface protein P36p (PF52) of Plasmodium falciparum (isolate 3D7).